The chain runs to 30 residues: Bacteriocin SRCAM 37 (30 aa).

The protein belongs to the bacteriocin class IIA/YGNGV family.

The protein resides in the secreted. In terms of biological role, bacteriocin with antibacterial activity against C.jejuni. This is Bacteriocin SRCAM 37 from Paenibacillus polymyxa (Bacillus polymyxa).